The chain runs to 316 residues: uncharacterized protein (316 aa).

4 helical membrane-spanning segments follow: residues 74 to 94 (IPVL…GMAI), 99 to 119 (WPYA…IFLG), 166 to 186 (MAGC…TVLG), and 188 to 208 (VEGF…GYIF).

It is found in the cell membrane. This is an uncharacterized protein from Synechocystis sp. (strain ATCC 27184 / PCC 6803 / Kazusa).